Consider the following 331-residue polypeptide: HPr kinase/phosphorylase (331 aa).

Catalysis depends on residues histidine 153 and lysine 174. 168–175 provides a ligand contact to ATP; sequence GKSGLGKS. Residue serine 175 coordinates Mg(2+). Aspartate 192 (proton acceptor; for phosphorylation activity. Proton donor; for dephosphorylation activity) is an active-site residue. An important for the catalytic mechanism of both phosphorylation and dephosphorylation region spans residues 217 to 226; the sequence is MEIRGLGVVD. Glutamate 218 contributes to the Mg(2+) binding site. Arginine 259 is an active-site residue. The tract at residues 280–285 is important for the catalytic mechanism of dephosphorylation; it reads PIFPGK.

The protein belongs to the HPrK/P family. In terms of assembly, homohexamer. The cofactor is Mg(2+).

It carries out the reaction [HPr protein]-L-serine + ATP = [HPr protein]-O-phospho-L-serine + ADP + H(+). The enzyme catalyses [HPr protein]-O-phospho-L-serine + phosphate + H(+) = [HPr protein]-L-serine + diphosphate. Its function is as follows. Catalyzes the ATP- as well as the pyrophosphate-dependent phosphorylation of a specific serine residue in HPr, a phosphocarrier protein of the phosphoenolpyruvate-dependent sugar phosphotransferase system (PTS). HprK/P also catalyzes the pyrophosphate-producing, inorganic phosphate-dependent dephosphorylation (phosphorolysis) of seryl-phosphorylated HPr (P-Ser-HPr). The chain is HPr kinase/phosphorylase from Pelodictyon phaeoclathratiforme (strain DSM 5477 / BU-1).